The primary structure comprises 157 residues: SsrA-binding protein (157 aa).

The protein belongs to the SmpB family.

The protein resides in the cytoplasm. Functionally, required for rescue of stalled ribosomes mediated by trans-translation. Binds to transfer-messenger RNA (tmRNA), required for stable association of tmRNA with ribosomes. tmRNA and SmpB together mimic tRNA shape, replacing the anticodon stem-loop with SmpB. tmRNA is encoded by the ssrA gene; the 2 termini fold to resemble tRNA(Ala) and it encodes a 'tag peptide', a short internal open reading frame. During trans-translation Ala-aminoacylated tmRNA acts like a tRNA, entering the A-site of stalled ribosomes, displacing the stalled mRNA. The ribosome then switches to translate the ORF on the tmRNA; the nascent peptide is terminated with the 'tag peptide' encoded by the tmRNA and targeted for degradation. The ribosome is freed to recommence translation, which seems to be the essential function of trans-translation. The chain is SsrA-binding protein from Chromohalobacter salexigens (strain ATCC BAA-138 / DSM 3043 / CIP 106854 / NCIMB 13768 / 1H11).